The primary structure comprises 784 residues: Repetin (784 aa).

The interval 1 to 91 (MAQLLNSILS…VQACYHKLDN (91 aa)) is S-100-like. 2 consecutive EF-hand domains span residues 13–48 (DVFH…LQRP) and 49–84 (NDPE…LVQA). 6 residues coordinate Ca(2+): Glu-32, Asp-62, Asp-64, Asp-66, His-68, and Glu-73. Disordered regions lie at residues 92–221 (KSHG…QAKW), 282–584 (GCGQ…SHYI), 601–661 (TEGT…HQHK), and 677–784 (RDWQ…NHQR). The segment covering 124-201 (RHEEERQNSH…FSFDQSERQS (78 aa)) has biased composition (basic and acidic residues). 7 stretches are compositionally biased toward polar residues: residues 286–296 (TDRQGQSSHYG), 304–343 (SYHY…SSHY), 356–392 (DQTN…SHYG), 400–486 (SSHY…QSSH), 504–584 (GQGQ…SHYI), 610–646 (VEQS…QNGH), and 680–695 (QSCS…QTRQ). Composition is skewed to basic and acidic residues over residues 704-722 (WAEE…HESQ) and 729-784 (QDRR…NHQR).

Belongs to the S100-fused protein family. Post-translationally, potential substrate of transglutaminase. Some arginines are probably converted to citrullines by peptidylarginine deimidase. Expression is scattered in the normal epidermis but strong in the acrosyringium, the inner hair root sheath and in the filiform papilli of the tongue.

It localises to the secreted. The protein localises to the extracellular space. Its subcellular location is the extracellular matrix. Involved in the cornified cell envelope formation. Multifunctional epidermal matrix protein. Reversibly binds calcium. The chain is Repetin (RPTN) from Homo sapiens (Human).